We begin with the raw amino-acid sequence, 347 residues long: Histone deacetylase 11 (347 aa).

The interval Thr-14–Gly-326 is histone deacetylase. His-143 is a catalytic residue.

It belongs to the histone deacetylase family. Interacts with HDAC6. Weakly expressed in most tissues. Strongly expressed in brain, heart, skeletal muscle, kidney and testis.

The protein resides in the nucleus. The catalysed reaction is N(6)-acetyl-L-lysyl-[histone] + H2O = L-lysyl-[histone] + acetate. Its function is as follows. Responsible for the deacetylation of lysine residues on the N-terminal part of the core histones (H2A, H2B, H3 and H4). Histone deacetylation gives a tag for epigenetic repression and plays an important role in transcriptional regulation, cell cycle progression and developmental events. Histone deacetylases act via the formation of large multiprotein complexes. The chain is Histone deacetylase 11 (HDAC11) from Homo sapiens (Human).